The following is a 446-amino-acid chain: Glycine--tRNA ligase (446 aa).

Substrate is bound by residues Arg100 and Glu158. ATP is bound by residues 190–192 (RNE), 200–205 (FRTREF), 275–276 (EL), and 319–322 (GIER). 205–209 (FEQFE) is a binding site for substrate. 315 to 319 (EPAVG) lines the substrate pocket.

The protein belongs to the class-II aminoacyl-tRNA synthetase family. As to quaternary structure, homodimer.

The protein resides in the cytoplasm. The catalysed reaction is tRNA(Gly) + glycine + ATP = glycyl-tRNA(Gly) + AMP + diphosphate. Functionally, catalyzes the attachment of glycine to tRNA(Gly). The polypeptide is Glycine--tRNA ligase (Mycoplasma genitalium (strain ATCC 33530 / DSM 19775 / NCTC 10195 / G37) (Mycoplasmoides genitalium)).